A 469-amino-acid polypeptide reads, in one-letter code: MAQFLTEDFLLDTEFARRLYHDYAKDQPIYDYHCHLPPEQIAENTRFKNLYDIWLKGDHYKWRAMRTNGVAERFCTGDASDREKFDAWAATVPHTIGNPLYHWTHLELRRPFGITGKLLSPATADEIWQRGNELLAQDSFSARGIMQKMNVKMVGTTDDPIDDLRHHKAIAADGSFNIKVLPSWRPDKAFNIEAAGFNDYMQRLEAAADTSISRFADLCTALNKRMDHFAAHGCKVSDHALDVVVYGEADEATLDGILARRLAGNQPSTEETAQFKTAVLLFLSGEYHRREWVQQYHIGALRNNNSRMFNLVGPDIGFDSINDQPLAQPLSRLLDAQGLRNALPKTILYCLNPRDNEVIGTMVGNFQGEGAAGKMQFGSGWWFNDQKDGMQRQMTQLAQLGLLSRFVGMLTDSRSFLSYTRHEYFRRILCQMIGRWVEDGEAPADIELLGSMVKNICFDNAKQYFAIEL.

Belongs to the metallo-dependent hydrolases superfamily. Uronate isomerase family.

The enzyme catalyses D-glucuronate = D-fructuronate. The catalysed reaction is aldehydo-D-galacturonate = keto-D-tagaturonate. It participates in carbohydrate metabolism; pentose and glucuronate interconversion. This Yersinia enterocolitica serotype O:8 / biotype 1B (strain NCTC 13174 / 8081) protein is Uronate isomerase.